A 298-amino-acid polypeptide reads, in one-letter code: DNA repair protein RecO (298 aa).

It belongs to the RecO family.

Functionally, involved in DNA repair and RecF pathway recombination. This chain is DNA repair protein RecO, found in Cupriavidus metallidurans (strain ATCC 43123 / DSM 2839 / NBRC 102507 / CH34) (Ralstonia metallidurans).